The following is a 443-amino-acid chain: Exodeoxyribonuclease 7 large subunit (443 aa).

It belongs to the XseA family. As to quaternary structure, heterooligomer composed of large and small subunits.

The protein localises to the cytoplasm. It carries out the reaction Exonucleolytic cleavage in either 5'- to 3'- or 3'- to 5'-direction to yield nucleoside 5'-phosphates.. In terms of biological role, bidirectionally degrades single-stranded DNA into large acid-insoluble oligonucleotides, which are then degraded further into small acid-soluble oligonucleotides. This chain is Exodeoxyribonuclease 7 large subunit, found in Legionella pneumophila (strain Lens).